Consider the following 342-residue polypeptide: tRNA N6-adenosine threonylcarbamoyltransferase (342 aa).

2 residues coordinate Fe cation: His-119 and His-123. Substrate is bound by residues 142–146 (VVSGG), Asp-175, Gly-188, and Asn-282. Residue Asp-310 coordinates Fe cation.

The protein belongs to the KAE1 / TsaD family. Requires Fe(2+) as cofactor.

It localises to the cytoplasm. The enzyme catalyses L-threonylcarbamoyladenylate + adenosine(37) in tRNA = N(6)-L-threonylcarbamoyladenosine(37) in tRNA + AMP + H(+). Required for the formation of a threonylcarbamoyl group on adenosine at position 37 (t(6)A37) in tRNAs that read codons beginning with adenine. Is involved in the transfer of the threonylcarbamoyl moiety of threonylcarbamoyl-AMP (TC-AMP) to the N6 group of A37, together with TsaE and TsaB. TsaD likely plays a direct catalytic role in this reaction. This Moorella thermoacetica (strain ATCC 39073 / JCM 9320) protein is tRNA N6-adenosine threonylcarbamoyltransferase.